The following is a 78-amino-acid chain: Large ribosomal subunit protein eL20 (78 aa).

This sequence belongs to the eukaryotic ribosomal protein eL20 family. In terms of assembly, part of the 50S ribosomal subunit. Binds 23S rRNA.

In Pyrobaculum aerophilum (strain ATCC 51768 / DSM 7523 / JCM 9630 / CIP 104966 / NBRC 100827 / IM2), this protein is Large ribosomal subunit protein eL20.